A 360-amino-acid polypeptide reads, in one-letter code: Diacylglycerol O-acyltransferase 3 (360 aa).

Residues 153-182 are disordered; it reads KAKAMKKMTEMDSESSSSSESSDSDCDKGK. [2Fe-2S] cluster is bound by residues cysteine 265, cysteine 270, cysteine 298, and cysteine 302.

The protein belongs to the diacylglycerol acyltransferase family. [2Fe-2S] cluster serves as cofactor.

It catalyses the reaction an acyl-CoA + a 1,2-diacyl-sn-glycerol = a triacyl-sn-glycerol + CoA. It participates in glycerolipid metabolism; triacylglycerol biosynthesis. In terms of biological role, involved in triacylglycerol (TAG) biosynthesis. Catalyzes the acylation of the sn-3 hydroxy group of sn-1,2-diacylglycerol using acyl-CoA. May preferentially use linolenoyl-CoA as substrate and to a lesser extent linoleoyl-CoA. May contribute to the active recycling of linoleate and linolenate into TAG when seed oil breakdown is blocked. The chain is Diacylglycerol O-acyltransferase 3 from Arabidopsis thaliana (Mouse-ear cress).